The sequence spans 118 residues: V-type proton ATPase subunit F (118 aa).

Belongs to the V-ATPase F subunit family. V-ATPase is a heteromultimeric enzyme composed of a peripheral catalytic V1 complex (components A to H) attached to an integral membrane V0 proton pore complex (components: a, c, c', c'', d, e, f and VOA1).

The protein resides in the vacuole membrane. Subunit of the V1 complex of vacuolar(H+)-ATPase (V-ATPase), a multisubunit enzyme composed of a peripheral complex (V1) that hydrolyzes ATP and a membrane integral complex (V0) that translocates protons. V-ATPase is responsible for acidifying and maintaining the pH of intracellular compartments. The protein is V-type proton ATPase subunit F of Saccharomyces cerevisiae (strain ATCC 204508 / S288c) (Baker's yeast).